A 403-amino-acid chain; its full sequence is CCA-adding enzyme (403 aa).

ATP contacts are provided by Gly32 and Arg35. CTP-binding residues include Gly32 and Arg35. The Mg(2+) site is built by Asp45 and Asp47. ATP contacts are provided by Arg116, Asp159, Arg162, Arg165, and Arg168. 5 residues coordinate CTP: Arg116, Asp159, Arg162, Arg165, and Arg168.

This sequence belongs to the tRNA nucleotidyltransferase/poly(A) polymerase family. Bacterial CCA-adding enzyme type 3 subfamily. In terms of assembly, homodimer. Mg(2+) serves as cofactor.

The enzyme catalyses a tRNA precursor + 2 CTP + ATP = a tRNA with a 3' CCA end + 3 diphosphate. It carries out the reaction a tRNA with a 3' CCA end + 2 CTP + ATP = a tRNA with a 3' CCACCA end + 3 diphosphate. Its function is as follows. Catalyzes the addition and repair of the essential 3'-terminal CCA sequence in tRNAs without using a nucleic acid template. Adds these three nucleotides in the order of C, C, and A to the tRNA nucleotide-73, using CTP and ATP as substrates and producing inorganic pyrophosphate. tRNA 3'-terminal CCA addition is required both for tRNA processing and repair. Also involved in tRNA surveillance by mediating tandem CCA addition to generate a CCACCA at the 3' terminus of unstable tRNAs. While stable tRNAs receive only 3'-terminal CCA, unstable tRNAs are marked with CCACCA and rapidly degraded. This Leuconostoc citreum (strain KM20) protein is CCA-adding enzyme.